The chain runs to 704 residues: Polyribonucleotide nucleotidyltransferase (704 aa).

Asp-485 and Asp-491 together coordinate Mg(2+). A KH domain is found at Pro-552–Ile-611. In terms of domain architecture, S1 motif spans Gly-621–Lys-689.

It belongs to the polyribonucleotide nucleotidyltransferase family. It depends on Mg(2+) as a cofactor.

Its subcellular location is the cytoplasm. The catalysed reaction is RNA(n+1) + phosphate = RNA(n) + a ribonucleoside 5'-diphosphate. Its function is as follows. Involved in mRNA degradation. Catalyzes the phosphorolysis of single-stranded polyribonucleotides processively in the 3'- to 5'-direction. This Clostridium botulinum (strain Eklund 17B / Type B) protein is Polyribonucleotide nucleotidyltransferase.